Consider the following 488-residue polypeptide: Ribulose bisphosphate carboxylase large chain 1 (488 aa).

2 residues coordinate substrate: asparagine 128 and threonine 178. Lysine 180 acts as the Proton acceptor in catalysis. Lysine 182 is a binding site for substrate. Positions 206, 208, and 209 each coordinate Mg(2+). Lysine 206 carries the post-translational modification N6-carboxylysine. Catalysis depends on histidine 298, which acts as the Proton acceptor. The substrate site is built by arginine 299, histidine 331, and serine 383.

Belongs to the RuBisCO large chain family. Type I subfamily. In terms of assembly, heterohexadecamer of 8 large chains and 8 small chains. Mg(2+) serves as cofactor.

The catalysed reaction is 2 (2R)-3-phosphoglycerate + 2 H(+) = D-ribulose 1,5-bisphosphate + CO2 + H2O. It catalyses the reaction D-ribulose 1,5-bisphosphate + O2 = 2-phosphoglycolate + (2R)-3-phosphoglycerate + 2 H(+). In terms of biological role, ruBisCO catalyzes two reactions: the carboxylation of D-ribulose 1,5-bisphosphate, the primary event in carbon dioxide fixation, as well as the oxidative fragmentation of the pentose substrate. Both reactions occur simultaneously and in competition at the same active site. The chain is Ribulose bisphosphate carboxylase large chain 1 from Methylibium petroleiphilum (strain ATCC BAA-1232 / LMG 22953 / PM1).